The primary structure comprises 320 residues: MNDNYLILSIESSCDETSLALFENNKLIAHKISSSASIQSLHGGVVPELASRYHEQNINHLFNEILNETKINPLTITHVAYTAMPGLPGCLHVGKVFAKQLAVLINAELVPINHLHAHVFSASINQNLTFPFLGLVVSGGESCIYLVNDYDEIKVLNQTHDDAIGECYDKIARVLGWKYPGGPIIDKNYQENLATLEFIKSQPAAKDFSFSGLKTAVINYIHNAKQKKISFDPVVVASSFQKFAINEIIKKIKYYLNLYKLNHLAIGGGVSANSLLRKKIQSLDVISYIPEMIYTGDNAAMIGAYAYALIKNHKKSILIK.

His-114 and His-118 together coordinate Fe cation. Residues 136 to 140 (VVSGG), Asp-169, Gly-182, Asp-186, and Asn-273 contribute to the substrate site. Asp-297 provides a ligand contact to Fe cation.

This sequence belongs to the KAE1 / TsaD family. Requires Fe(2+) as cofactor.

It localises to the cytoplasm. The enzyme catalyses L-threonylcarbamoyladenylate + adenosine(37) in tRNA = N(6)-L-threonylcarbamoyladenosine(37) in tRNA + AMP + H(+). Functionally, required for the formation of a threonylcarbamoyl group on adenosine at position 37 (t(6)A37) in tRNAs that read codons beginning with adenine. Is involved in the transfer of the threonylcarbamoyl moiety of threonylcarbamoyl-AMP (TC-AMP) to the N6 group of A37, together with TsaE and TsaB. TsaD likely plays a direct catalytic role in this reaction. The polypeptide is tRNA N6-adenosine threonylcarbamoyltransferase (Ureaplasma parvum serovar 3 (strain ATCC 27815 / 27 / NCTC 11736)).